Reading from the N-terminus, the 535-residue chain is UDP-N-acetylmuramoyl-L-alanyl-D-glutamate--2,6-diaminopimelate ligase (535 aa).

Leu-67 provides a ligand contact to UDP-N-acetyl-alpha-D-muramoyl-L-alanyl-D-glutamate. Gly-153–Thr-159 contacts ATP. Residues Thr-195–Thr-196, Ser-222, and Arg-230 contribute to the UDP-N-acetyl-alpha-D-muramoyl-L-alanyl-D-glutamate site. The residue at position 262 (Lys-262) is an N6-carboxylysine. Residues Arg-424, Asp-448–Arg-451, Gly-502, and Glu-506 contribute to the meso-2,6-diaminopimelate site. Residues Asp-448–Arg-451 carry the Meso-diaminopimelate recognition motif motif.

Belongs to the MurCDEF family. MurE subfamily. Mg(2+) is required as a cofactor. In terms of processing, carboxylation is probably crucial for Mg(2+) binding and, consequently, for the gamma-phosphate positioning of ATP.

The protein localises to the cytoplasm. It carries out the reaction UDP-N-acetyl-alpha-D-muramoyl-L-alanyl-D-glutamate + meso-2,6-diaminopimelate + ATP = UDP-N-acetyl-alpha-D-muramoyl-L-alanyl-gamma-D-glutamyl-meso-2,6-diaminopimelate + ADP + phosphate + H(+). Its pathway is cell wall biogenesis; peptidoglycan biosynthesis. In terms of biological role, catalyzes the addition of meso-diaminopimelic acid to the nucleotide precursor UDP-N-acetylmuramoyl-L-alanyl-D-glutamate (UMAG) in the biosynthesis of bacterial cell-wall peptidoglycan. This chain is UDP-N-acetylmuramoyl-L-alanyl-D-glutamate--2,6-diaminopimelate ligase, found in Mycobacterium bovis (strain ATCC BAA-935 / AF2122/97).